Here is a 431-residue protein sequence, read N- to C-terminus: Phosphoribosylamine--glycine ligase (431 aa).

In terms of domain architecture, ATP-grasp spans 108–315; that stretch reads KDFLARHEIP…LVLLVEAAFA (208 aa). Residue 134-195 participates in ATP binding; that stretch reads LQEKGAPIVI…EEFLDGEEAS (62 aa). Mg(2+) contacts are provided by Glu-285 and Asn-287.

This sequence belongs to the GARS family. Requires Mg(2+) as cofactor. Mn(2+) serves as cofactor.

It catalyses the reaction 5-phospho-beta-D-ribosylamine + glycine + ATP = N(1)-(5-phospho-beta-D-ribosyl)glycinamide + ADP + phosphate + H(+). It functions in the pathway purine metabolism; IMP biosynthesis via de novo pathway; N(1)-(5-phospho-D-ribosyl)glycinamide from 5-phospho-alpha-D-ribose 1-diphosphate: step 2/2. This Pseudomonas putida (strain ATCC 47054 / DSM 6125 / CFBP 8728 / NCIMB 11950 / KT2440) protein is Phosphoribosylamine--glycine ligase.